The sequence spans 397 residues: Argininosuccinate synthase (397 aa).

9 to 17 (AYSGGLDTS) contacts ATP. Residue Y86 participates in L-citrulline binding. Position 116 (G116) interacts with ATP. Residues T118, N122, and D123 each coordinate L-aspartate. N122 is an L-citrulline binding site. Residues R126, S174, E259, and Y271 each contribute to the L-citrulline site.

It belongs to the argininosuccinate synthase family. Type 1 subfamily. Homotetramer.

It localises to the cytoplasm. The catalysed reaction is L-citrulline + L-aspartate + ATP = 2-(N(omega)-L-arginino)succinate + AMP + diphosphate + H(+). The protein operates within amino-acid biosynthesis; L-arginine biosynthesis; L-arginine from L-ornithine and carbamoyl phosphate: step 2/3. The protein is Argininosuccinate synthase of Lactococcus lactis subsp. cremoris (strain SK11).